Here is a 123-residue protein sequence, read N- to C-terminus: Large ribosomal subunit protein bL12 (123 aa).

It belongs to the bacterial ribosomal protein bL12 family. Homodimer. Part of the ribosomal stalk of the 50S ribosomal subunit. Forms a multimeric L10(L12)X complex, where L10 forms an elongated spine to which 2 to 4 L12 dimers bind in a sequential fashion. Binds GTP-bound translation factors.

In terms of biological role, forms part of the ribosomal stalk which helps the ribosome interact with GTP-bound translation factors. Is thus essential for accurate translation. This chain is Large ribosomal subunit protein bL12, found in Rhodopseudomonas palustris (strain BisB18).